Reading from the N-terminus, the 73-residue chain is uncharacterized protein (73 aa).

This is an uncharacterized protein from Haemophilus influenzae (strain ATCC 51907 / DSM 11121 / KW20 / Rd).